The chain runs to 437 residues: Branched-chain amino acid transport system 2 carrier protein (437 aa).

12 consecutive transmembrane segments (helical) span residues leucine 9 to proline 29, alanine 43 to alanine 63, alanine 80 to arginine 100, glycine 117 to leucine 137, valine 149 to proline 169, glycine 192 to isoleucine 212, methionine 228 to leucine 248, leucine 280 to alanine 300, leucine 308 to alanine 328, leucine 335 to alanine 355, valine 369 to alanine 389, and leucine 404 to valine 424.

This sequence belongs to the branched chain amino acid transporter family.

Its subcellular location is the cell inner membrane. Functionally, component of the LIV-II transport system for branched-chain amino acids. BraB is specific for isoleucine, leucine and valine. The LIV-II transport system is coupled to sodium and lithium ions. This is Branched-chain amino acid transport system 2 carrier protein (braB) from Pseudomonas aeruginosa (strain ATCC 15692 / DSM 22644 / CIP 104116 / JCM 14847 / LMG 12228 / 1C / PRS 101 / PAO1).